The following is a 128-amino-acid chain: U24-ctenitoxin-Pn1a (128 aa).

Thyroglobulin type-1 domains follow at residues 4-67 and 72-127; these read KSDC…ECGC and KERK…SLKC. Intrachain disulfides connect cysteine 7–cysteine 27, cysteine 38–cysteine 45, cysteine 47–cysteine 67, and cysteine 107–cysteine 127.

As to expression, expressed by the venom gland.

Its subcellular location is the secreted. Cysteine proteinase inhibitor. This Phoneutria nigriventer (Brazilian armed spider) protein is U24-ctenitoxin-Pn1a.